The sequence spans 830 residues: Isethionate sulfite-lyase (830 aa).

One can recognise a PFL domain in the interval 31–700 (KRVFKLLERF…VVSATPNGRV (670 aa)). 2-hydroxyethane-1-sulfonate contacts are provided by residues arginine 189, glutamine 193, 468–470 (CIE), and arginine 678. Cysteine 468 functions as the Cysteine radical intermediate in the catalytic mechanism. Catalysis depends on glutamate 470, which acts as the Proton acceptor. A Glycine radical domain is found at 707–830 (DGSSPSHGAD…LIARTGHDQM (124 aa)). A Glycine radical modification is found at glycine 805.

It belongs to the glycyl radical enzyme (GRE) family. Homodimer. In terms of processing, requires the activating protein IslB to generate the key active site glycyl radical on Gly-805 that is involved in catalysis.

It catalyses the reaction 2-hydroxyethane-1-sulfonate = acetaldehyde + sulfite + H(+). The protein operates within organosulfur degradation; alkanesulfonate degradation. Involved in an anaerobic respiration pathway that converts the sulfonate taurine (2-aminoethanesulfonate) to ammonia, acetate and sulfide. Catalyzes the radical-mediated C-S bond cleavage of isethionate (2-hydroxyethanesulfonate) to form sulfite and acetaldehyde. Is not able to use any alternate organosulfonate or (S)-1,2-propanediol or choline as a substrate, showing that this enzyme is highly specific for isethionate. In Bilophila wadsworthia (strain 3_1_6), this protein is Isethionate sulfite-lyase.